Reading from the N-terminus, the 202-residue chain is Probable chemoreceptor glutamine deamidase CheD (202 aa).

It belongs to the CheD family.

It carries out the reaction L-glutaminyl-[protein] + H2O = L-glutamyl-[protein] + NH4(+). Probably deamidates glutamine residues to glutamate on methyl-accepting chemotaxis receptors (MCPs), playing an important role in chemotaxis. This chain is Probable chemoreceptor glutamine deamidase CheD, found in Thiobacillus denitrificans (strain ATCC 25259 / T1).